The primary structure comprises 444 residues: Homocysteine/cysteine synthase (444 aa).

Position 44 is a phosphoserine (Ser44). Lys160 is covalently cross-linked (Glycyl lysine isopeptide (Lys-Gly) (interchain with G-Cter in ubiquitin)). Lys209 is modified (N6-(pyridoxal phosphate)lysine).

It belongs to the trans-sulfuration enzymes family. As to quaternary structure, homotetramer. Pyridoxal 5'-phosphate serves as cofactor.

It localises to the cytoplasm. It catalyses the reaction O-acetyl-L-homoserine + methanethiol = L-methionine + acetate + H(+). The catalysed reaction is O-acetyl-L-homoserine + hydrogen sulfide = L-homocysteine + acetate. The enzyme catalyses O-acetyl-L-serine + hydrogen sulfide = L-cysteine + acetate. The protein operates within amino-acid biosynthesis; L-methionine biosynthesis via de novo pathway; L-homocysteine from O-acetyl-L-homoserine. Functionally, catalyzes the conversion of O-acetyl-L-homoserine (OAH) into homocysteine in the methionine biosynthesis pathway. Required to efficiently reduce toxic levels of hydrogen sulfide generated when the sulfate assimilation pathway (SAP) is active. Also catalyzes the conversion of O-acetylserine (OAS) into cysteine, the last step in the cysteine biosynthesis pathway. However, it seems that in S.cerevisiae cysteine biosynthesis occurs exclusively through the cystathionine pathway and not via direct incorporation of sulfur into OAS. It therefore has no metabolic role in cysteine biosynthesis and may only have a regulatory role controlling OAS levels. This Saccharomyces cerevisiae (strain ATCC 204508 / S288c) (Baker's yeast) protein is Homocysteine/cysteine synthase.